Consider the following 443-residue polypeptide: Regulator of sigma E protease (443 aa).

His21 lines the Zn(2+) pocket. Glu22 is a catalytic residue. Residue His25 participates in Zn(2+) binding. Residues 98–118 traverse the membrane as a helical segment; that stretch reads FVIIAGPLANFIFAIFAYWVI. 2 PDZ domains span residues 106–185 and 198–287; these read ANFI…SPFN and NWTF…TPVR. 2 helical membrane-spanning segments follow: residues 369–389 and 423–443; these read LVYF…MNLF and IGAA…FLRL.

Belongs to the peptidase M50B family. As to quaternary structure, interacts with RseA. The cofactor is Zn(2+).

The protein localises to the cell inner membrane. Functionally, a site-2 regulated intramembrane protease (S2P) that cleaves a peptide bond in the transmembrane region of RseA. Part of a regulated intramembrane proteolysis (RIP) cascade. Acts on DegS-cleaved RseA to release the cytoplasmic domain of RseA. This provides the cell with sigma-E (RpoE) activity through the proteolysis of RseA. The sequence is that of Regulator of sigma E protease (rsep) from Haemophilus influenzae (strain ATCC 51907 / DSM 11121 / KW20 / Rd).